A 222-amino-acid polypeptide reads, in one-letter code: Riboflavin kinase (222 aa).

The H-T-H motif-like stretch occupies residues 1-94 (METIDAEDAA…AKIFDVKDEQ (94 aa)). Positions 95–222 (YVLTGTVMSG…ENSEVVVVIG (128 aa)) are riboflavin kinase. Position 104–109 (104–109 (GVGEGR)) interacts with CDP. Threonine 133 and asparagine 135 together coordinate Mg(2+). FMN-binding residues include threonine 190 and glutamate 198. Position 203-206 (203-206 (TQLR)) interacts with CDP.

The protein belongs to the archaeal riboflavin kinase family. Mg(2+) is required as a cofactor.

It carries out the reaction riboflavin + CTP = CDP + FMN + H(+). It functions in the pathway cofactor biosynthesis; FMN biosynthesis; FMN from riboflavin (CTP route): step 1/1. In terms of biological role, catalyzes the CTP-dependent phosphorylation of riboflavin (vitamin B2) to form flavin mononucleotide (FMN). The protein is Riboflavin kinase (ribK) of Methanocorpusculum labreanum (strain ATCC 43576 / DSM 4855 / Z).